Reading from the N-terminus, the 209-residue chain is uncharacterized protein (209 aa).

The MPN domain maps to 1-67 (MEILPKYKPE…LIMYNYWTID (67 aa)). The Zn(2+) site is built by histidine 17, histidine 19, and aspartate 30. Positions 17–30 (HTHPKGPAEPSIND) match the JAMM motif motif.

This is an uncharacterized protein from Acidianus convivator (ATV).